The chain runs to 261 residues: Carbonic anhydrase 1 (261 aa).

A disordered region spans residues 1–40 (MASPDWGYDDKNGPEQWSKLYPIANGNNQSPVDIKTSETK). Ala2 bears the N-acetylalanine mark. One can recognise an Alpha-carbonic anhydrase domain in the interval 4 to 261 (PDWGYDDKNG…LKGRTVRASF (258 aa)). The active-site Proton donor/acceptor is His65. Residues His95, His97, and His120 each coordinate Zn(2+). Substrate contacts are provided by residues Thr200 and 200–201 (TH). The tract at residues 241–261 (PMQHNNRPTQPLKGRTVRASF) is disordered.

This sequence belongs to the alpha-carbonic anhydrase family. The cofactor is Zn(2+).

Its subcellular location is the cytoplasm. The catalysed reaction is hydrogencarbonate + H(+) = CO2 + H2O. The enzyme catalyses urea = cyanamide + H2O. Its activity is regulated as follows. Inhibited by acetazolamide. In terms of biological role, catalyzes the reversible hydration of carbon dioxide. Can hydrate cyanamide to urea. This is Carbonic anhydrase 1 (CA1) from Pan troglodytes (Chimpanzee).